Consider the following 33-residue polypeptide: Photosystem II reaction center protein Psb30 (33 aa).

The helical transmembrane segment at 5–25 threads the bilayer; sequence ILAQLTALAFIVVSGPLVIAL.

Belongs to the Psb30/Ycf12 family. PSII is composed of 1 copy each of membrane proteins PsbA, PsbB, PsbC, PsbD, PsbE, PsbF, PsbH, PsbI, PsbJ, PsbK, PsbL, PsbM, PsbT, PsbX, PsbY, PsbZ, Psb30/Ycf12, peripheral proteins of the oxygen-evolving complex and a large number of cofactors. It forms dimeric complexes.

The protein resides in the plastid. Its subcellular location is the chloroplast thylakoid membrane. Its function is as follows. A core subunit of photosystem II (PSII), probably helps stabilize the reaction center. This is Photosystem II reaction center protein Psb30 from Chaetosphaeridium globosum (Charophycean green alga).